The chain runs to 243 residues: Probable 6-oxopurine nucleoside phosphorylase (243 aa).

Residues threonine 8 and 48-49 each bind phosphate; that span reads RH. Methionine 174 contacts substrate. Residue threonine 175 coordinates phosphate. 198-200 serves as a coordination point for substrate; the sequence is NYA.

Belongs to the PNP/MTAP phosphorylase family. MTAP subfamily. As to quaternary structure, homohexamer. Dimer of a homotrimer.

The enzyme catalyses a purine D-ribonucleoside + phosphate = a purine nucleobase + alpha-D-ribose 1-phosphate. It participates in purine metabolism; purine nucleoside salvage. Its function is as follows. Purine nucleoside phosphorylase which is highly specific for 6-oxopurine nucleosides. Cleaves guanosine or inosine to respective bases and sugar-1-phosphate molecules. Involved in purine salvage. The chain is Probable 6-oxopurine nucleoside phosphorylase from Archaeoglobus fulgidus (strain ATCC 49558 / DSM 4304 / JCM 9628 / NBRC 100126 / VC-16).